A 264-amino-acid polypeptide reads, in one-letter code: Indole-3-glycerol phosphate synthase (264 aa).

This sequence belongs to the TrpC family.

The enzyme catalyses 1-(2-carboxyphenylamino)-1-deoxy-D-ribulose 5-phosphate + H(+) = (1S,2R)-1-C-(indol-3-yl)glycerol 3-phosphate + CO2 + H2O. It participates in amino-acid biosynthesis; L-tryptophan biosynthesis; L-tryptophan from chorismate: step 4/5. The sequence is that of Indole-3-glycerol phosphate synthase from Stenotrophomonas maltophilia (strain K279a).